The chain runs to 282 residues: Putative hydrolase BamMC406_5393 (282 aa).

Residues E124, E126, and D155 each contribute to the Mg(2+) site.

This sequence belongs to the FAH family. The cofactor is Mg(2+).

The chain is Putative hydrolase BamMC406_5393 from Burkholderia ambifaria (strain MC40-6).